Here is a 914-residue protein sequence, read N- to C-terminus: Effector protein hopAE1 (914 aa).

Polar residues predominate over residues M1 to S13. Positions M1–T31 are disordered.

This sequence belongs to the HopW family.

The protein localises to the secreted. In Pseudomonas syringae pv. syringae (strain B728a), this protein is Effector protein hopAE1 (hopAE1).